A 390-amino-acid chain; its full sequence is 2-oxoisovalerate dehydrogenase subunit beta, mitochondrial (390 aa).

The N-terminal 48 residues, 1-48, are a transit peptide targeting the mitochondrion; the sequence is MAAVAARAGGLLRLGAAGAERRRRGLRCAALVQGFLQPAVDDASQKRR. Position 150 (Y150) interacts with thiamine diphosphate. K(+) is bound by residues G176, L178, T179, C226, and D229. At K230 the chain carries N6-acetyllysine. Residue N231 coordinates K(+). Position 239 is an N6-acetyllysine (K239).

In terms of assembly, heterotetramer of 2 alpha/BCKDHA and 2 beta chains/BCKDHB that forms the branched-chain alpha-keto acid decarboxylase (E1) component of the BCKD complex. The branched-chain alpha-ketoacid dehydrogenase is a large complex composed of three major building blocks E1, E2 and E3. It is organized around E2, a 24-meric cubic core composed of DBT, to which are associated 6 to 12 copies of E1, and approximately 6 copies of the dehydrogenase E3, a DLD dimer. Thiamine diphosphate serves as cofactor.

The protein resides in the mitochondrion matrix. It carries out the reaction N(6)-[(R)-lipoyl]-L-lysyl-[protein] + 3-methyl-2-oxobutanoate + H(+) = N(6)-[(R)-S(8)-2-methylpropanoyldihydrolipoyl]-L-lysyl-[protein] + CO2. Functionally, together with BCKDHA forms the heterotetrameric E1 subunit of the mitochondrial branched-chain alpha-ketoacid dehydrogenase (BCKD) complex. The BCKD complex catalyzes the multi-step oxidative decarboxylation of alpha-ketoacids derived from the branched-chain amino-acids valine, leucine and isoleucine producing CO2 and acyl-CoA which is subsequently utilized to produce energy. The E1 subunit catalyzes the first step with the decarboxylation of the alpha-ketoacid forming an enzyme-product intermediate. A reductive acylation mediated by the lipoylamide cofactor of E2 extracts the acyl group from the E1 active site for the next step of the reaction. This Rattus norvegicus (Rat) protein is 2-oxoisovalerate dehydrogenase subunit beta, mitochondrial.